The chain runs to 552 residues: Probable protein kinase UbiB (552 aa).

One can recognise a Protein kinase domain in the interval His121–Ala504. Residues Leu127–Val135 and Lys149 each bind ATP. The Proton acceptor role is filled by Asp284. Transmembrane regions (helical) follow at residues Val501 to His521 and Ile530 to Trp550.

The protein belongs to the ABC1 family. UbiB subfamily.

It is found in the cell inner membrane. It participates in cofactor biosynthesis; ubiquinone biosynthesis [regulation]. Is probably a protein kinase regulator of UbiI activity which is involved in aerobic coenzyme Q (ubiquinone) biosynthesis. In Xylella fastidiosa (strain M12), this protein is Probable protein kinase UbiB.